The chain runs to 226 residues: Uracil-DNA glycosylase (226 aa).

Catalysis depends on D64, which acts as the Proton acceptor.

Belongs to the uracil-DNA glycosylase (UDG) superfamily. UNG family.

The protein localises to the cytoplasm. It catalyses the reaction Hydrolyzes single-stranded DNA or mismatched double-stranded DNA and polynucleotides, releasing free uracil.. Its function is as follows. Excises uracil residues from the DNA which can arise as a result of misincorporation of dUMP residues by DNA polymerase or due to deamination of cytosine. The protein is Uracil-DNA glycosylase of Proteus mirabilis (strain HI4320).